We begin with the raw amino-acid sequence, 309 residues long: MEIKDWYKLTFQIESDSEDIIIWKLNELGIFSFSFEYLIKNQNKKEVNIWLPFDSWDNNSRSDFEKIISKILKINDSKNKFFNWSIIKEEDWLTSWKKFWAPELVGNHFLILPCWINLNEKFKDKQIIKIDPGAAFGTGSHPSTYLCLEKMENILFSDKKVLDIGSGSGILSIAARLGGAKEVCAVDNDYLAINSTNSNFQLNFGNLNNLNTYLGSFNEVILKNQLKQFDFVLCNILAEVIKGMIPNIYKCLRNNGEVIFSGILNSQKDEIIKILIQNNLKLLDVSSRKNWACISAQKPASNPKHKIYL.

The S-adenosyl-L-methionine site is built by Thr144, Gly165, Asp187, and Asn235.

The protein belongs to the methyltransferase superfamily. PrmA family.

It is found in the cytoplasm. It catalyses the reaction L-lysyl-[protein] + 3 S-adenosyl-L-methionine = N(6),N(6),N(6)-trimethyl-L-lysyl-[protein] + 3 S-adenosyl-L-homocysteine + 3 H(+). Functionally, methylates ribosomal protein L11. In Prochlorococcus marinus (strain MIT 9215), this protein is Ribosomal protein L11 methyltransferase.